We begin with the raw amino-acid sequence, 389 residues long: Sinapine esterase (389 aa).

Residues 1-25 (MASSLKKLITSFLLFFFYTIIVASS) form the signal peptide. The active-site Nucleophile is Ser41. Asn104, Asn137, and Asn320 each carry an N-linked (GlcNAc...) asparagine glycan. Residues Asp345 and His348 contribute to the active site. N-linked (GlcNAc...) asparagine glycans are attached at residues Asn372 and Asn383.

It belongs to the 'GDSL' lipolytic enzyme family. As to expression, expressed in most tissues or organs of the mature seedlings. Not expressed in roots of mature seedlings.

Its subcellular location is the secreted. It catalyses the reaction O-sinapoylcholine + H2O = (E)-sinapate + choline + H(+). Inhibited by PMSF. In terms of biological role, sinapine esterase that catalyzes that hydrolysis of sinapine, releasing choline and sinapate. Sinapine (O-sinapoylcholine) is the predominant phenolic compound in a complex group of sinapate esters in seeds of oilseed rape (B.napus). Sinapine has antinutritive activity and prevents the use of seed protein for food and feed. Shows broad substrate specificity towards various other choline esters, including phosphatidylcholine. The polypeptide is Sinapine esterase (Brassica napus (Rape)).